The sequence spans 494 residues: 3-octaprenyl-4-hydroxybenzoate carboxy-lyase (494 aa).

Asn-172 contacts Mn(2+). Residues 175-177, 189-191, and 194-195 contribute to the prenylated FMN site; these read IYR, RWL, and RG. Glu-238 contacts Mn(2+). Asp-287 functions as the Proton donor in the catalytic mechanism.

This sequence belongs to the UbiD family. As to quaternary structure, homohexamer. It depends on prenylated FMN as a cofactor. Mn(2+) is required as a cofactor.

The protein resides in the cell membrane. The catalysed reaction is a 4-hydroxy-3-(all-trans-polyprenyl)benzoate + H(+) = a 2-(all-trans-polyprenyl)phenol + CO2. It functions in the pathway cofactor biosynthesis; ubiquinone biosynthesis. Catalyzes the decarboxylation of 3-octaprenyl-4-hydroxy benzoate to 2-octaprenylphenol, an intermediate step in ubiquinone biosynthesis. This is 3-octaprenyl-4-hydroxybenzoate carboxy-lyase from Cronobacter sakazakii (strain ATCC BAA-894) (Enterobacter sakazakii).